The chain runs to 471 residues: L-lysine 2,3-aminomutase (471 aa).

A Radical SAM core domain is found at His-120 to Ala-332. 3 residues coordinate [4Fe-4S] cluster: Cys-134, Cys-138, and Cys-141. N6-(pyridoxal phosphate)lysine is present on Lys-346.

It belongs to the radical SAM superfamily. KamA family. As to quaternary structure, homotetramer. [4Fe-4S] cluster serves as cofactor. It depends on pyridoxal 5'-phosphate as a cofactor.

The enzyme catalyses L-lysine = (3S)-3,6-diaminohexanoate. Its pathway is amino-acid degradation; L-lysine degradation via acetate pathway. Functionally, catalyzes the interconversion of L-alpha-lysine and L-beta-lysine. The protein is L-lysine 2,3-aminomutase (kamA) of Bacillus subtilis (strain 168).